The sequence spans 184 residues: Elongation factor P (184 aa).

This sequence belongs to the elongation factor P family.

Its subcellular location is the cytoplasm. Its pathway is protein biosynthesis; polypeptide chain elongation. Functionally, involved in peptide bond synthesis. Stimulates efficient translation and peptide-bond synthesis on native or reconstituted 70S ribosomes in vitro. Probably functions indirectly by altering the affinity of the ribosome for aminoacyl-tRNA, thus increasing their reactivity as acceptors for peptidyl transferase. This is Elongation factor P from Acidovorax ebreus (strain TPSY) (Diaphorobacter sp. (strain TPSY)).